The sequence spans 120 residues: Large ribosomal subunit protein bL12 (120 aa).

Belongs to the bacterial ribosomal protein bL12 family. As to quaternary structure, homodimer. Part of the ribosomal stalk of the 50S ribosomal subunit. Forms a multimeric L10(L12)X complex, where L10 forms an elongated spine to which 2 to 4 L12 dimers bind in a sequential fashion. Binds GTP-bound translation factors.

Forms part of the ribosomal stalk which helps the ribosome interact with GTP-bound translation factors. Is thus essential for accurate translation. This is Large ribosomal subunit protein bL12 from Alkaliphilus metalliredigens (strain QYMF).